The sequence spans 503 residues: Probable cytosol aminopeptidase (503 aa).

Mn(2+) contacts are provided by K274 and D279. K286 is a catalytic residue. Mn(2+)-binding residues include D297, D356, and E358. R360 is a catalytic residue.

Belongs to the peptidase M17 family. It depends on Mn(2+) as a cofactor.

It is found in the cytoplasm. It carries out the reaction Release of an N-terminal amino acid, Xaa-|-Yaa-, in which Xaa is preferably Leu, but may be other amino acids including Pro although not Arg or Lys, and Yaa may be Pro. Amino acid amides and methyl esters are also readily hydrolyzed, but rates on arylamides are exceedingly low.. The enzyme catalyses Release of an N-terminal amino acid, preferentially leucine, but not glutamic or aspartic acids.. Presumably involved in the processing and regular turnover of intracellular proteins. Catalyzes the removal of unsubstituted N-terminal amino acids from various peptides. This is Probable cytosol aminopeptidase from Paraburkholderia phymatum (strain DSM 17167 / CIP 108236 / LMG 21445 / STM815) (Burkholderia phymatum).